Reading from the N-terminus, the 351-residue chain is Prostaglandin reductase 2 (351 aa).

Substrate is bound at residue 99-100; the sequence is FY. Residues 165–168, lysine 192, tyrosine 208, asparagine 231, 253–259, 287–289, and asparagine 337 contribute to the NADP(+) site; these read GACG, CGQISQY, and FTV. 288–290 is a substrate binding site; the sequence is TVL.

The protein belongs to the NADP-dependent oxidoreductase L4BD family. Monomer. In terms of tissue distribution, widely expressed with highest levels in adipose tissues.

The protein resides in the cytoplasm. It catalyses the reaction 13,14-dihydro-15-oxo-prostaglandin E2 + NAD(+) = 15-oxoprostaglandin E2 + NADH + H(+). The catalysed reaction is 13,14-dihydro-15-oxo-prostaglandin E2 + NADP(+) = 15-oxoprostaglandin E2 + NADPH + H(+). It carries out the reaction 13,14-dihydro-15-oxo-PGF2alpha + NADP(+) = 15-oxoprostaglandin F2alpha + NADPH + H(+). The enzyme catalyses 13,14-dihydro-15-oxo-prostaglandin E1 + NADP(+) = 15-oxoprostaglandin E1 + NADPH + H(+). It catalyses the reaction 13,14-dihydro-15-oxo-prostaglandin F1alpha + NADP(+) = 15-oxoprostaglandin F1alpha + NADPH + H(+). Functionally, functions as 15-oxo-prostaglandin 13-reductase and acts on 15-keto-PGE1, 15-keto-PGE2, 15-keto-PGE1-alpha and 15-keto-PGE2-alpha with highest activity towards 15-keto-PGE2. Overexpression represses transcriptional activity of PPARG and inhibits adipocyte differentiation. This Mus musculus (Mouse) protein is Prostaglandin reductase 2.